Reading from the N-terminus, the 229-residue chain is Type III pantothenate kinase (229 aa).

An ATP-binding site is contributed by 6-13 (NIGNSRQH). Residues tyrosine 77 and 81–84 (GIDR) contribute to the substrate site. Catalysis depends on aspartate 83, which acts as the Proton acceptor. Aspartate 103 is a K(+) binding site. Threonine 106 lines the ATP pocket. Threonine 159 lines the substrate pocket.

Belongs to the type III pantothenate kinase family. As to quaternary structure, homodimer. NH4(+) is required as a cofactor. Requires K(+) as cofactor.

Its subcellular location is the cytoplasm. The enzyme catalyses (R)-pantothenate + ATP = (R)-4'-phosphopantothenate + ADP + H(+). It participates in cofactor biosynthesis; coenzyme A biosynthesis; CoA from (R)-pantothenate: step 1/5. Functionally, catalyzes the phosphorylation of pantothenate (Pan), the first step in CoA biosynthesis. The protein is Type III pantothenate kinase of Gloeobacter violaceus (strain ATCC 29082 / PCC 7421).